A 176-amino-acid polypeptide reads, in one-letter code: NAD(P)H-quinone oxidoreductase subunit 6, chloroplastic (176 aa).

The next 5 membrane-spanning stretches (helical) occupy residues 10–30 (FLLV…VLFT), 32–52 (PIFS…LYIL), 61–81 (AQLL…VMFM), 95–115 (VGDG…ISTI), and 152–172 (FFLP…GAIS).

This sequence belongs to the complex I subunit 6 family. NDH is composed of at least 16 different subunits, 5 of which are encoded in the nucleus.

It localises to the plastid. It is found in the chloroplast thylakoid membrane. It catalyses the reaction a plastoquinone + NADH + (n+1) H(+)(in) = a plastoquinol + NAD(+) + n H(+)(out). The enzyme catalyses a plastoquinone + NADPH + (n+1) H(+)(in) = a plastoquinol + NADP(+) + n H(+)(out). Functionally, NDH shuttles electrons from NAD(P)H:plastoquinone, via FMN and iron-sulfur (Fe-S) centers, to quinones in the photosynthetic chain and possibly in a chloroplast respiratory chain. The immediate electron acceptor for the enzyme in this species is believed to be plastoquinone. Couples the redox reaction to proton translocation, and thus conserves the redox energy in a proton gradient. The sequence is that of NAD(P)H-quinone oxidoreductase subunit 6, chloroplastic (ndhG) from Aethionema grandiflorum (Persian stone-cress).